The following is an 88-amino-acid chain: Small ribosomal subunit protein bS20 (88 aa).

Residues 1–25 (MANTPSAKKAARKIERRTAVNRARR) are disordered.

The protein belongs to the bacterial ribosomal protein bS20 family.

Binds directly to 16S ribosomal RNA. In Azorhizobium caulinodans (strain ATCC 43989 / DSM 5975 / JCM 20966 / LMG 6465 / NBRC 14845 / NCIMB 13405 / ORS 571), this protein is Small ribosomal subunit protein bS20.